Reading from the N-terminus, the 232-residue chain is MPKHSKRYNEVRKLVDRNKDYDLNEAIDLAKKVATAKFDETVELHIKTNIDYRKSDQQIRSTIALPHGTGKEVKVLVFATGEKAEEAKAAGADYVGAEDLAEKIQKENFLDFDVAIATPDMMRVIGKLGKILGPRGLMPNPKAGTVTNDVASAVKEFKKGRMEVRTDKTGNLHIPVGKASFDNEKLKENIKSAYEQILNLKPAGVKGNFIKKVVLSTTMGPGIKVDPATLTQ.

This sequence belongs to the universal ribosomal protein uL1 family. In terms of assembly, part of the 50S ribosomal subunit.

In terms of biological role, binds directly to 23S rRNA. The L1 stalk is quite mobile in the ribosome, and is involved in E site tRNA release. Functionally, protein L1 is also a translational repressor protein, it controls the translation of the L11 operon by binding to its mRNA. The sequence is that of Large ribosomal subunit protein uL1 from Thermosipho africanus (strain TCF52B).